Reading from the N-terminus, the 352-residue chain is Dysbindin (352 aa).

Ser11 is subject to Phosphoserine. Residues 88–176 (EKKRTSLNEL…EAFKAELDTE (89 aa)) are a coiled coil. The interval 173 to 325 (LDTEHTQKAL…DEEEVQVDTA (153 aa)) is dysbindin. The short motif at 243–256 (LMDISDQEALDVFL) is the Nuclear export signal element. A disordered region spans residues 267-352 (SPGVEMESNP…SDQCDSTQDI (86 aa)). Positions 274–285 (SNPNQNEMSLQI) are enriched in polar residues. Over residues 286–301 (PSPSESASQPPASPSA) the composition is skewed to low complexity. Phosphoserine is present on residues Ser315, Ser340, and Ser343.

This sequence belongs to the dysbindin family. In terms of assembly, interacts with AP3M1 and TRIM32. Interacts (isoform 1 and isoform 2 only) with the DNA-dependent protein kinase complex DNA-PK; the interaction phosphorylates DTNBP1 in vitro. Interacts directly in this complex with XRCC5 and XRCC6. Interacts with XPO1; the interaction exports DTNBP1 out of the nucleus. Component of the biogenesis of lysosome-related organelles complex 1 (BLOC-1) composed of BLOC1S1, BLOC1S2, BLOC1S3, BLOC1S4, BLOC1S5, BLOC1S6, DTNBP1/BLOC1S7 and SNAPIN/BLOC1S8. The BLOC-1 complex associates with the AP-3 protein complex and membrane protein cargos. This BLOC-1 complex also associates with the BLOC-2 complex in endosomes. Binds to DTNA and DTNB but may not be a physiological binding partner. Interacts (via its coiled coil domain) with KXD1. Interacts with AP3B2, BLOC1S5, BLOC1S6, CMYA5, PI4K2, RNF151 and SNAPIN/BLOC1S8. Interacts with XPO1; the interaction exports DTNBP1 out of the nucleus. Post-translationally, ubiquitinated by TRIM32. Ubiquitination leads to DTNBP1 degradation. In terms of tissue distribution, detected in brain, in hippocampus and dentate gyrus neurons. Detected at axon bundles and axon terminals, notably in the cerebellum and hippocampus. Detected in neuropil in hippocampus, lateral septum, basal ganglia and substantia nigra. Highly expressed in pyramidal cells of hippocampus CA2 and CA3. Detected at the heart and skeletal muscle sarcolemma (at protein level). Ubiquitously expressed. The highest expression is observed in testis, liver, kidney, brain, heart and lung. Expressed at lower levels in stomach and small intestine.

The protein localises to the cytoplasm. Its subcellular location is the cytoplasmic vesicle membrane. The protein resides in the endosome membrane. It localises to the melanosome membrane. It is found in the postsynaptic density. The protein localises to the endoplasmic reticulum. Its subcellular location is the nucleus. The protein resides in the cytoplasmic vesicle. It localises to the secretory vesicle. It is found in the synaptic vesicle membrane. The protein localises to the postsynaptic cell membrane. Functionally, component of the BLOC-1 complex, a complex that is required for normal biogenesis of lysosome-related organelles (LRO), such as platelet dense granules and melanosomes. In concert with the AP-3 complex, the BLOC-1 complex is required to target membrane protein cargos into vesicles assembled at cell bodies for delivery into neurites and nerve terminals. The BLOC-1 complex, in association with SNARE proteins, is also proposed to be involved in neurite extension. Associates with the BLOC-2 complex to facilitate the transport of TYRP1 independent of AP-3 function. Plays a role in synaptic vesicle trafficking and in neurotransmitter release. Plays a role in the regulation of cell surface exposure of DRD2. May play a role in actin cytoskeleton reorganization and neurite outgrowth. May modulate MAPK8 phosphorylation. Appears to promote neuronal transmission and viability through regulating the expression of SNAP25 and SYN1, modulating PI3-kinase-Akt signaling and influencing glutamatergic release. Regulates the expression of SYN1 through binding to its promoter. Modulates prefrontal cortical activity via the dopamine/D2 pathway. The protein is Dysbindin (Dtnbp1) of Mus musculus (Mouse).